The sequence spans 594 residues: MASSTPSSSATSSNAGADPNTANLRPTTYDTWCGVAHGCTRKLGLKICGFLQRTNSLEEKSRLVSAFKERQSSKNLLSCENSDRDGRFRRTETDFSNLFARDLLPAKNGEEQTVQFLLEVVDILLNYVRKTFDRSTKVLDFHHPHQLLEGMEGFNLELSDHPESLEQILVDCRDTLKYGVRTGHPRFFNQLSTGLDIIGLAGEWLTSTANTNMFTYEIAPVFVLMEQITLKKMREIVGWSSKDGDGIFSPGGAISNMYSIMAARYKFFPEVKTKGMAAVPKLVLFTSEHSHYSIKKAGAALGFGTDNVILIKCNERGKIIPADLEAKILEAKQKGYVPLYVNATAGTTVYGAFDPIQEIADICEKYNLWLHVDAAWGGGLLMSRKHRHKLSGIERANSVTWNPHKMMGVLLQCSAILVKEKGILQGCNQMCAGYLFQPDKQYDVSYDTGDKAIQCGRHVDIFKFWLMWKAKGTVGFENQINKCLELAEYLYAKIKNREEFEMVFDGEPEHTNVCFWYIPQSLRGIPDSPERREKLHRVAPKIKALMMESGTTMVGYQPQGDKANFFRMVISNPAATQSDIDFLIEEIERLGQDL.

Residues 1–13 are compositionally biased toward low complexity; it reads MASSTPSSSATSS. The segment at 1 to 22 is disordered; that stretch reads MASSTPSSSATSSNAGADPNTA. A Phosphoserine modification is found at serine 78. 190 to 192 contacts 4-aminobutanoate; it reads QLS. Lysine 405 bears the N6-(pyridoxal phosphate)lysine mark. 4-aminobutanoate is bound at residue arginine 567.

The protein belongs to the group II decarboxylase family. Homodimer. Requires pyridoxal 5'-phosphate as cofactor.

The enzyme catalyses L-glutamate + H(+) = 4-aminobutanoate + CO2. Functionally, catalyzes the synthesis of the inhibitory neurotransmitter gamma-aminobutyric acid (GABA) with pyridoxal 5'-phosphate as cofactor. The sequence is that of Glutamate decarboxylase 1 (GAD1) from Canis lupus familiaris (Dog).